Reading from the N-terminus, the 258-residue chain is Transmembrane O-methyltransferase homolog (258 aa).

Residues glutamate 104, 106-107 (GT), serine 112, glutamate 130, and serine 160 each bind S-adenosyl-L-methionine.

It belongs to the class I-like SAM-binding methyltransferase superfamily. Cation-dependent O-methyltransferase family. As to quaternary structure, interacts with LHFPL5, PCDH15, TMC1, TMC2 and TMIE. The interaction of TOMT with TMC1 and TMC2 is required for the transportation of TMC1/2 into the stereocilia of hair cells. Interacts directly with TMC1. As to expression, widely expressed with high levels in outer and inner hair cells of the cochlea and vestibule.

The protein resides in the cytoplasm. Its subcellular location is the endoplasmic reticulum. It carries out the reaction a catechol + S-adenosyl-L-methionine = a guaiacol + S-adenosyl-L-homocysteine + H(+). Catalyzes the O-methylation, and thereby the inactivation, of catecholamine neurotransmitters and catechol hormones. Required for auditory function. Component of the cochlear hair cell's mechanotransduction (MET) machinery. Involved in the assembly of the asymmetric tip-link MET complex. Required for transportation of TMC1 and TMC2 proteins into the mechanically sensitive stereocilia of the hair cells. The function in MET is independent of the enzymatic activity. In Mus musculus (Mouse), this protein is Transmembrane O-methyltransferase homolog.